Here is a 249-residue protein sequence, read N- to C-terminus: UDP-N-acetyl-D-mannosaminuronic acid transferase (249 aa).

This sequence belongs to the glycosyltransferase 26 family.

The enzyme catalyses UDP-N-acetyl-alpha-D-mannosaminouronate + N-acetyl-alpha-D-glucosaminyl-di-trans,octa-cis-undecaprenyl diphosphate = beta-D-ManNAcA-(1-&gt;4)-alpha-D-GlcNAc-di-trans,octa-cis-undecaprenyl diphosphate + UDP + H(+). The protein operates within bacterial outer membrane biogenesis; enterobacterial common antigen biosynthesis. Catalyzes the synthesis of Und-PP-GlcNAc-ManNAcA (Lipid II), the second lipid-linked intermediate involved in enterobacterial common antigen (ECA) synthesis. The polypeptide is UDP-N-acetyl-D-mannosaminuronic acid transferase (Pectobacterium carotovorum subsp. carotovorum (strain PC1)).